The chain runs to 65 residues: Large ribosomal subunit protein uL29 (65 aa).

Belongs to the universal ribosomal protein uL29 family.

The chain is Large ribosomal subunit protein uL29 (rpmC) from Xylella fastidiosa (strain 9a5c).